A 116-amino-acid polypeptide reads, in one-letter code: Small ribosomal subunit protein bS6 (116 aa).

Positions 94–116 are disordered; it reads ESITEPSPLTKPKEDRKGDSEAA. Positions 104–116 are enriched in basic and acidic residues; sequence KPKEDRKGDSEAA.

The protein belongs to the bacterial ribosomal protein bS6 family.

Binds together with bS18 to 16S ribosomal RNA. This Idiomarina loihiensis (strain ATCC BAA-735 / DSM 15497 / L2-TR) protein is Small ribosomal subunit protein bS6.